Reading from the N-terminus, the 431-residue chain is Trigger factor (431 aa).

One can recognise a PPIase FKBP-type domain in the interval 165-250; that stretch reads GDTVVIDFDG…IHELKRKELP (86 aa).

This sequence belongs to the FKBP-type PPIase family. Tig subfamily.

Its subcellular location is the cytoplasm. The catalysed reaction is [protein]-peptidylproline (omega=180) = [protein]-peptidylproline (omega=0). Its function is as follows. Involved in protein export. Acts as a chaperone by maintaining the newly synthesized protein in an open conformation. Functions as a peptidyl-prolyl cis-trans isomerase. The protein is Trigger factor of Leuconostoc mesenteroides subsp. mesenteroides (strain ATCC 8293 / DSM 20343 / BCRC 11652 / CCM 1803 / JCM 6124 / NCDO 523 / NBRC 100496 / NCIMB 8023 / NCTC 12954 / NRRL B-1118 / 37Y).